A 476-amino-acid chain; its full sequence is NADP-dependent glyceraldehyde-3-phosphate dehydrogenase (476 aa).

Arg-103 serves as a coordination point for substrate. Residue Ser-151 coordinates NADP(+). Residue 154 to 155 (NY) participates in substrate binding. NADP(+)-binding positions include Lys-177, Thr-180, Asp-215, and 230 to 251 (GSTP…MLEL). Catalysis depends on residues Glu-250 and Cys-284. 283–285 (RCT) is a substrate binding site. Residue Glu-377 coordinates NADP(+). Arg-437 is a substrate binding site.

The protein belongs to the aldehyde dehydrogenase family. Homotetramer.

It carries out the reaction D-glyceraldehyde 3-phosphate + NADP(+) + H2O = (2R)-3-phosphoglycerate + NADPH + 2 H(+). In terms of biological role, catalyzes the irreversible NADP-dependent oxidation of glyceraldehyde-3-phosphate to 3-phosphoglycerate. Is not able to use NAD instead of NADP. May play an important role in NADPH production in S.equinus. The chain is NADP-dependent glyceraldehyde-3-phosphate dehydrogenase (gapN) from Streptococcus equinus (Streptococcus bovis).